The sequence spans 227 residues: SPbeta prophage-derived uncharacterized membrane protein YomJ (227 aa).

2 helical membrane passes run 16 to 36 and 131 to 151; these read LFFL…IVGL and GIVA…GLSA.

Its subcellular location is the cell membrane. The sequence is that of SPbeta prophage-derived uncharacterized membrane protein YomJ (yomJ) from Bacillus subtilis (strain 168).